The chain runs to 288 residues: Proteasome subunit beta (288 aa).

The propeptide at 1–60 is removed in mature form; by autocatalysis; that stretch reads MESNADWGSRGGLPQAFLTPGISSFSEFLKGFAPEYLPSGRPLPGGLGSASAAGDIAPHG. Residue Thr-61 is the Nucleophile of the active site.

Belongs to the peptidase T1B family. In terms of assembly, the 20S proteasome core is composed of 14 alpha and 14 beta subunits that assemble into four stacked heptameric rings, resulting in a barrel-shaped structure. The two inner rings, each composed of seven catalytic beta subunits, are sandwiched by two outer rings, each composed of seven alpha subunits. The catalytic chamber with the active sites is on the inside of the barrel. Has a gated structure, the ends of the cylinder being occluded by the N-termini of the alpha-subunits. Is capped by the proteasome-associated ATPase, ARC.

Its subcellular location is the cytoplasm. The enzyme catalyses Cleavage of peptide bonds with very broad specificity.. The protein operates within protein degradation; proteasomal Pup-dependent pathway. Its activity is regulated as follows. The formation of the proteasomal ATPase ARC-20S proteasome complex, likely via the docking of the C-termini of ARC into the intersubunit pockets in the alpha-rings, may trigger opening of the gate for substrate entry. Interconversion between the open-gate and close-gate conformations leads to a dynamic regulation of the 20S proteasome proteolysis activity. In terms of biological role, component of the proteasome core, a large protease complex with broad specificity involved in protein degradation. The protein is Proteasome subunit beta of Catenulispora acidiphila (strain DSM 44928 / JCM 14897 / NBRC 102108 / NRRL B-24433 / ID139908).